We begin with the raw amino-acid sequence, 547 residues long: GMP synthase [glutamine-hydrolyzing] (547 aa).

One can recognise a Glutamine amidotransferase type-1 domain in the interval 12–210; it reads KVLILDFGSQ…VLEIAGAKPD (199 aa). Cysteine 89 (nucleophile) is an active-site residue. Active-site residues include histidine 184 and glutamate 186. One can recognise a GMPS ATP-PPase domain in the interval 211–403; sequence WIMRDHIEEA…LGLPPEMVYR (193 aa). 238 to 244 provides a ligand contact to ATP; it reads SGGVDSS.

Homodimer.

The enzyme catalyses XMP + L-glutamine + ATP + H2O = GMP + L-glutamate + AMP + diphosphate + 2 H(+). It participates in purine metabolism; GMP biosynthesis; GMP from XMP (L-Gln route): step 1/1. Functionally, catalyzes the synthesis of GMP from XMP. The protein is GMP synthase [glutamine-hydrolyzing] of Ralstonia nicotianae (strain ATCC BAA-1114 / GMI1000) (Ralstonia solanacearum).